The chain runs to 31 residues: Zinc metalloproteinase alsophinase (31 aa).

Q1 is subject to Pyrrolidone carboxylic acid. Residues 9–31 enclose the Peptidase M12B domain; the sequence is KYIEFYLVVDNGMFXKYSXXFTV. Residue E12 coordinates Ca(2+).

As to quaternary structure, monomer. Requires Zn(2+) as cofactor. In terms of processing, contains 9 disulfide bonds. In terms of tissue distribution, expressed by the venom gland.

It localises to the secreted. Inhibited by 1,10-phenanthroline. Its function is as follows. Snake venom zinc metalloprotease that has potent hemorrhagic activity, fibrinogenolytic activity on the alpha-subunit of human fibrinogen (FGA) in vitro and provokes necrosis in skin, muscle and lung tissues. May contribute to local edema and ecchymosis induced by venom. Hydrolyzes model substrate (beta-chain of insulin) at Ala(14)-Leu(15). This Borikenophis portoricensis (Puerto Rican racer) protein is Zinc metalloproteinase alsophinase.